Here is a 407-residue protein sequence, read N- to C-terminus: Na(+)-translocating NADH-quinone reductase subunit F (407 aa).

The chain crosses the membrane as a helical span at residues 4-24 (IILGVFFFTAIVVALVFVILG). A 2Fe-2S ferredoxin-type domain is found at 33-125 (GNVEVLINGE…NMKIHVHEEV (93 aa)). Residues Cys68, Cys74, Cys77, and Cys109 each coordinate [2Fe-2S] cluster. The FAD-binding FR-type domain occupies 128–269 (VKKWECTVRS…SGPFGEFFAR (142 aa)).

This sequence belongs to the NqrF family. As to quaternary structure, composed of six subunits; NqrA, NqrB, NqrC, NqrD, NqrE and NqrF. The cofactor is [2Fe-2S] cluster. It depends on FAD as a cofactor.

It localises to the cell inner membrane. It carries out the reaction a ubiquinone + n Na(+)(in) + NADH + H(+) = a ubiquinol + n Na(+)(out) + NAD(+). In terms of biological role, NQR complex catalyzes the reduction of ubiquinone-1 to ubiquinol by two successive reactions, coupled with the transport of Na(+) ions from the cytoplasm to the periplasm. The first step is catalyzed by NqrF, which accepts electrons from NADH and reduces ubiquinone-1 to ubisemiquinone by a one-electron transfer pathway. This Methylococcus capsulatus (strain ATCC 33009 / NCIMB 11132 / Bath) protein is Na(+)-translocating NADH-quinone reductase subunit F.